The chain runs to 568 residues: Phenylalanine--tRNA ligase beta subunit (568 aa).

In terms of domain architecture, B5 spans Leu278–Pro353. Asp331, Asp337, Glu340, and Asp341 together coordinate Mg(2+).

The protein belongs to the phenylalanyl-tRNA synthetase beta subunit family. Type 2 subfamily. As to quaternary structure, tetramer of two alpha and two beta subunits. It depends on Mg(2+) as a cofactor.

It is found in the cytoplasm. The enzyme catalyses tRNA(Phe) + L-phenylalanine + ATP = L-phenylalanyl-tRNA(Phe) + AMP + diphosphate + H(+). This Thermococcus gammatolerans (strain DSM 15229 / JCM 11827 / EJ3) protein is Phenylalanine--tRNA ligase beta subunit.